Here is a 199-residue protein sequence, read N- to C-terminus: Putative acetyltransferase SACOL2570 (199 aa).

Belongs to the transferase hexapeptide repeat family.

The chain is Putative acetyltransferase SACOL2570 from Staphylococcus aureus (strain COL).